Here is a 108-residue protein sequence, read N- to C-terminus: Small ribosomal subunit protein uS17 (108 aa).

The disordered stretch occupies residues Met1–Val26. A compositionally biased stretch (low complexity) spans Ala8 to Ser17.

It belongs to the universal ribosomal protein uS17 family. Part of the 30S ribosomal subunit.

In terms of biological role, one of the primary rRNA binding proteins, it binds specifically to the 5'-end of 16S ribosomal RNA. The chain is Small ribosomal subunit protein uS17 from Myxococcus xanthus (strain DK1622).